Reading from the N-terminus, the 679-residue chain is HEAT repeat-containing protein 3 (679 aa).

A compositionally biased stretch (basic residues) spans 1 to 11 (MGKSRTKRFKR). Positions 1–40 (MGKSRTKRFKRPQFSPIESCQAEAAAASNGTGDEEDDGPA) are disordered. At S15 the chain carries Phosphoserine. HEAT repeat units lie at residues 38 to 69 (GPAA…VQQR) and 74 to 110 (DLAR…SACG). S144 is modified (phosphoserine). Residue T339 is modified to Phosphothreonine.

Belongs to the nuclear import and ribosome assembly adapter family. In terms of assembly, component of a hexameric 5S RNP precursor complex, composed of 5S RNA, RRS1, RPF2/BXDC1, RPL5, RPL11 and HEATR3; this complex acts as a precursor for ribosome assembly.

Plays a role in ribosome biogenesis and in nuclear import of the 60S ribosomal protein L5/large ribosomal subunit protein uL18 (RPL5). Required for proper erythrocyte maturation. The polypeptide is HEAT repeat-containing protein 3 (Heatr3) (Mus musculus (Mouse)).